A 270-amino-acid polypeptide reads, in one-letter code: Formamidopyrimidine-DNA glycosylase (270 aa).

P2 acts as the Schiff-base intermediate with DNA in catalysis. The active-site Proton donor is E3. K58 acts as the Proton donor; for beta-elimination activity in catalysis. H91, R109, and R151 together coordinate DNA. The segment at 236-270 adopts an FPG-type zinc-finger fold; it reads QVYGKTGQQCPSCETPLKAVKLAARASVYCPECQS. R260 acts as the Proton donor; for delta-elimination activity in catalysis.

Belongs to the FPG family. As to quaternary structure, monomer. Zn(2+) serves as cofactor.

It catalyses the reaction Hydrolysis of DNA containing ring-opened 7-methylguanine residues, releasing 2,6-diamino-4-hydroxy-5-(N-methyl)formamidopyrimidine.. It carries out the reaction 2'-deoxyribonucleotide-(2'-deoxyribose 5'-phosphate)-2'-deoxyribonucleotide-DNA = a 3'-end 2'-deoxyribonucleotide-(2,3-dehydro-2,3-deoxyribose 5'-phosphate)-DNA + a 5'-end 5'-phospho-2'-deoxyribonucleoside-DNA + H(+). In terms of biological role, involved in base excision repair of DNA damaged by oxidation or by mutagenic agents. Acts as a DNA glycosylase that recognizes and removes damaged bases. Has a preference for oxidized purines, such as 7,8-dihydro-8-oxoguanine (8-oxoG). Has AP (apurinic/apyrimidinic) lyase activity and introduces nicks in the DNA strand. Cleaves the DNA backbone by beta-delta elimination to generate a single-strand break at the site of the removed base with both 3'- and 5'-phosphates. This chain is Formamidopyrimidine-DNA glycosylase, found in Psychromonas ingrahamii (strain DSM 17664 / CCUG 51855 / 37).